We begin with the raw amino-acid sequence, 405 residues long: L-carnitine CoA-transferase (405 aa).

K97 and R104 together coordinate CoA. The active-site Nucleophile is D169.

The protein belongs to the CoA-transferase III family. CaiB subfamily. Homodimer.

Its subcellular location is the cytoplasm. It carries out the reaction crotonobetainyl-CoA + (R)-carnitine = crotonobetaine + (R)-carnitinyl-CoA. The enzyme catalyses 4-(trimethylamino)butanoyl-CoA + (R)-carnitine = (R)-carnitinyl-CoA + 4-(trimethylamino)butanoate. The protein operates within amine and polyamine metabolism; carnitine metabolism. Functionally, catalyzes the reversible transfer of the CoA moiety from gamma-butyrobetainyl-CoA to L-carnitine to generate L-carnitinyl-CoA and gamma-butyrobetaine. Is also able to catalyze the reversible transfer of the CoA moiety from gamma-butyrobetainyl-CoA or L-carnitinyl-CoA to crotonobetaine to generate crotonobetainyl-CoA. The polypeptide is L-carnitine CoA-transferase (Escherichia coli (strain SE11)).